The primary structure comprises 586 residues: Cryptochrome-1 (586 aa).

The Photolyase/cryptochrome alpha/beta domain maps to 3–132 (VNAVHWFRKG…EVIVRISHTL (130 aa)). Lysine 11 is covalently cross-linked (Glycyl lysine isopeptide (Lys-Gly) (interchain with G-Cter in ubiquitin)). An LIR 1 motif is present at residues 50 to 54 (NRWRF). Serine 71 bears the Phosphoserine; by AMPK mark. The LIR 2 signature appears at 82 to 87 (DVFPRL). Lysine 107 is covalently cross-linked (Glycyl lysine isopeptide (Lys-Gly) (interchain with G-Cter in ubiquitin)). An LIR 3 motif is present at residues 151-156 (KRFQTL). Residue lysine 159 forms a Glycyl lysine isopeptide (Lys-Gly) (interchain with G-Cter in ubiquitin) linkage. Serine 247 is subject to Phosphoserine; by MAPK. Serine 252 serves as a coordination point for FAD. Short sequence motifs (LIR) lie at residues 255–260 (LRFGCL) and 271–276 (DLYKKV). A Phosphoserine; by AMPK modification is found at serine 280. An LIR 6 motif is present at residues 285-290 (SLYGQL). Glutamine 289 serves as a coordination point for FAD. Lysine 329 participates in a covalent cross-link: Glycyl lysine isopeptide (Lys-Gly) (interchain with G-Cter in ubiquitin). The short motif at 335–339 (TGFPW) is the LIR 7 element. Histidine 355 contacts FAD. The interval 371–470 (WISWEEGMKV…LIGINYPKPM (100 aa)) is required for inhibition of CLOCK-BMAL1-mediated transcription. Residues 379 to 384 (KVFEEL) carry the LIR 8 motif. Residue 387–389 (DAD) coordinates FAD. Short sequence motifs (LIR) lie at residues 395–400 (GSWMWL), 411–416 (HCYCPV), and 430–435 (RRYLPV). Residues 471–493 (VNHAEASRLNIERMKQIYQQLSR) are interaction with TIMELESS. Lysine 485 participates in a covalent cross-link: Glycyl lysine isopeptide (Lys-Gly) (interchain with G-Cter in ubiquitin). Short sequence motifs (LIR) lie at residues 486 to 491 (QIYQQL) and 492 to 497 (SRYRGL). Residues 545–559 (QQTHLLKQGRSSMGT) show a composition bias toward polar residues. The disordered stretch occupies residues 545 to 586 (QQTHLLKQGRSSMGTGLSGGKRPSQEEDTQSIGPKVQRQSTN). Lysine 565 is covalently cross-linked (Glycyl lysine isopeptide (Lys-Gly) (interchain with G-Cter in ubiquitin)). A Phosphoserine modification is found at serine 568.

The protein belongs to the DNA photolyase class-1 family. Component of the circadian core oscillator, which includes the CRY proteins, CLOCK or NPAS2, BMAL1 or BMAL2, CSNK1D and/or CSNK1E, TIMELESS, and the PER proteins. Interacts directly with TIMELESS. Interacts directly with PER1, PER2 and PER3; interaction with PER2 inhibits its ubiquitination and vice versa. Interacts with FBXL21. Interacts with FBXL3. Interacts with CLOCK-BMAL1 independently of PER2 and DNA. Interacts with HDAC1, HDAC2 and SIN3B. Interacts with nuclear receptors AR, NR1D1, NR3C1/GR, RORA and RORC; the interaction with at least NR3C1/GR is ligand dependent. Interacts with PRKDC. Interacts with the G protein subunit alpha GNAS; the interaction may block GPCR-mediated regulation of cAMP concentrations. Interacts with PRMT5. Interacts with EZH2. Interacts with MYBBP1A, DOCK7, HNRNPU, RPL7A, RPL8 and RPS3. Interacts with PPP5C (via TPR repeats). Interacts with MAP1LC3B. Interacts with CLOCK. Interacts with BMAL1. Interacts weakly with HDAC3; this interaction is enhanced in the presence of FBXL3. Interacts with TRIM28, KCTD5 and DDB1. Interacts with FOXO1. Interacts with DTL and DDB1-CUL4A complex. Interacts with HNF4A. Interacts with PSMD2 in a KDM8-dependent manner. Interacts with KDM8 in a FBXL3-dependent manner. Interacts with PPARG in a ligand-dependent manner. Interacts with PPARD (via domain NR LBD) and NR1I2 (via domain NR LBD) in a ligand-dependent manner. Interacts with PPARA, NR1I3 and VDR. Requires FAD as cofactor. (6R)-5,10-methylene-5,6,7,8-tetrahydrofolate serves as cofactor. In terms of processing, phosphorylation on Ser-247 by MAPK is important for the inhibition of CLOCK-BMAL1-mediated transcriptional activity. Phosphorylation by CSNK1E requires interaction with PER1 or PER2. Phosphorylation at Ser-71 and Ser-280 by AMPK decreases protein stability. Phosphorylation at Ser-568 exhibits a robust circadian rhythm with a peak at CT8, increases protein stability, prevents SCF(FBXL3)-mediated degradation and is antagonized by interaction with PRKDC. Ubiquitinated by the SCF(FBXL3) and SCF(FBXL21) complexes, regulating the balance between degradation and stabilization. The SCF(FBXL3) complex is mainly nuclear and mediates ubiquitination and subsequent degradation of CRY1. In contrast, cytoplasmic SCF(FBXL21) complex-mediated ubiquitination leads to stabilize CRY1 and counteract the activity of the SCF(FBXL3) complex. The SCF(FBXL3) and SCF(FBXL21) complexes probably mediate ubiquitination at different Lys residues. Ubiquitination at Lys-11 and Lys-107 are specifically ubiquitinated by the SCF(FBXL21) complex but not by the SCF(FBXL3) complex. Ubiquitination may be inhibited by PER2. Deubiquitinated by USP7. Post-translationally, undergoes autophagy-mediated degradation in the liver in a time-dependent manner. Autophagic degradation of CRY1 (an inhibitor of gluconeogenesis) occurs during periods of reduced feeding allowing induction of gluconeogenesis and maintenance of blood glucose levels.

It localises to the cytoplasm. The protein resides in the nucleus. Transcriptional repressor which forms a core component of the circadian clock. The circadian clock, an internal time-keeping system, regulates various physiological processes through the generation of approximately 24 hour circadian rhythms in gene expression, which are translated into rhythms in metabolism and behavior. It is derived from the Latin roots 'circa' (about) and 'diem' (day) and acts as an important regulator of a wide array of physiological functions including metabolism, sleep, body temperature, blood pressure, endocrine, immune, cardiovascular, and renal function. Consists of two major components: the central clock, residing in the suprachiasmatic nucleus (SCN) of the brain, and the peripheral clocks that are present in nearly every tissue and organ system. Both the central and peripheral clocks can be reset by environmental cues, also known as Zeitgebers (German for 'timegivers'). The predominant Zeitgeber for the central clock is light, which is sensed by retina and signals directly to the SCN. The central clock entrains the peripheral clocks through neuronal and hormonal signals, body temperature and feeding-related cues, aligning all clocks with the external light/dark cycle. Circadian rhythms allow an organism to achieve temporal homeostasis with its environment at the molecular level by regulating gene expression to create a peak of protein expression once every 24 hours to control when a particular physiological process is most active with respect to the solar day. Transcription and translation of core clock components (CLOCK, NPAS2, BMAL1, BMAL2, PER1, PER2, PER3, CRY1 and CRY2) plays a critical role in rhythm generation, whereas delays imposed by post-translational modifications (PTMs) are important for determining the period (tau) of the rhythms (tau refers to the period of a rhythm and is the length, in time, of one complete cycle). A diurnal rhythm is synchronized with the day/night cycle, while the ultradian and infradian rhythms have a period shorter and longer than 24 hours, respectively. Disruptions in the circadian rhythms contribute to the pathology of cardiovascular diseases, cancer, metabolic syndromes and aging. A transcription/translation feedback loop (TTFL) forms the core of the molecular circadian clock mechanism. Transcription factors, CLOCK or NPAS2 and BMAL1 or BMAL2, form the positive limb of the feedback loop, act in the form of a heterodimer and activate the transcription of core clock genes and clock-controlled genes (involved in key metabolic processes), harboring E-box elements (5'-CACGTG-3') within their promoters. The core clock genes: PER1/2/3 and CRY1/2 which are transcriptional repressors form the negative limb of the feedback loop and interact with the CLOCK|NPAS2-BMAL1|BMAL2 heterodimer inhibiting its activity and thereby negatively regulating their own expression. This heterodimer also activates nuclear receptors NR1D1/2 and RORA/B/G, which form a second feedback loop and which activate and repress BMAL1 transcription, respectively. CRY1 and CRY2 have redundant functions but also differential and selective contributions at least in defining the pace of the SCN circadian clock and its circadian transcriptional outputs. More potent transcriptional repressor in cerebellum and liver than CRY2, though more effective in lengthening the period of the SCN oscillator. On its side, CRY2 seems to play a critical role in tuning SCN circadian period by opposing the action of CRY1. With CRY2, is dispensable for circadian rhythm generation but necessary for the development of intercellular networks for rhythm synchrony. Capable of translocating circadian clock core proteins such as PER proteins to the nucleus. Interacts with CLOCK-BMAL1 independently of PER proteins and is found at CLOCK-BMAL1-bound sites, suggesting that CRY may act as a molecular gatekeeper to maintainCLOCK-BMAL1 in a poised and repressed state until the proper time for transcriptional activation. Represses the CLOCK-BMAL1 induced transcription of BHLHE40/DEC1, ATF4, MTA1, KLF10 and NAMPT. May repress circadian target genes expression in collaboration with HDAC1 and HDAC2 through histone deacetylation. Mediates the clock-control activation of ATR and modulates ATR-mediated DNA damage checkpoint. In liver, mediates circadian regulation of cAMP signaling and gluconeogenesis by binding to membrane-coupled G proteins and blocking glucagon-mediated increases in intracellular cAMP concentrations and CREB1 phosphorylation. Inhibits hepatic gluconeogenesis by decreasing nuclear FOXO1 levels that down-regulates gluconeogenic gene expression. Besides its role in the maintenance of the circadian clock, is also involved in the regulation of other processes. Represses glucocorticoid receptor NR3C1/GR-induced transcriptional activity by binding to glucocorticoid response elements (GREs). Plays a key role in glucose and lipid metabolism modulation, in part, through the transcriptional regulation of genes involved in these pathways, such as LEP or ACSL4. Represses PPARD and its target genes in the skeletal muscle and limits exercise capacity. Plays an essential role in the generation of circadian rhythms in the retina. Represses the transcriptional activity of NR1I2. This Macaca fascicularis (Crab-eating macaque) protein is Cryptochrome-1 (CRY1).